The primary structure comprises 123 residues: UPF0102 protein APP7_1414 (123 aa).

Belongs to the UPF0102 family.

The chain is UPF0102 protein APP7_1414 from Actinobacillus pleuropneumoniae serotype 7 (strain AP76).